Reading from the N-terminus, the 329-residue chain is NADH-quinone oxidoreductase subunit H (329 aa).

9 helical membrane passes run 9–29 (LIKI…ATYI), 42–62 (GPCY…IKLF), 75–95 (FIFT…MAPI), 117–137 (IGFL…ILAG), 154–174 (IQLL…LMVV), 188–208 (GGFL…FLIA), 238–258 (LKWG…SFVI), 260–280 (IVFF…AILI), and 309–329 (WKIM…IILI).

Belongs to the complex I subunit 1 family. In terms of assembly, NDH-1 is composed of 14 different subunits. Subunits NuoA, H, J, K, L, M, N constitute the membrane sector of the complex.

The protein resides in the cell inner membrane. The enzyme catalyses a quinone + NADH + 5 H(+)(in) = a quinol + NAD(+) + 4 H(+)(out). In terms of biological role, NDH-1 shuttles electrons from NADH, via FMN and iron-sulfur (Fe-S) centers, to quinones in the respiratory chain. The immediate electron acceptor for the enzyme in this species is believed to be ubiquinone. Couples the redox reaction to proton translocation (for every two electrons transferred, four hydrogen ions are translocated across the cytoplasmic membrane), and thus conserves the redox energy in a proton gradient. This subunit may bind ubiquinone. The protein is NADH-quinone oxidoreductase subunit H of Helicobacter pylori (strain G27).